The following is a 285-amino-acid chain: Tyrosine recombinase XerA (285 aa).

The Core-binding (CB) domain occupies 7 to 84; the sequence is IVNSDILEEF…ALKSYFKFEG (78 aa). The Tyr recombinase domain maps to 100–274; the sequence is SLPKSLTEDE…TTKHLREAIE (175 aa). Residues R135, K160, H226, R229, and H252 contribute to the active site. The active-site O-(3'-phospho-DNA)-tyrosine intermediate is the Y261.

The protein belongs to the 'phage' integrase family. XerA subfamily.

It localises to the cytoplasm. Its function is as follows. Site-specific tyrosine recombinase, which acts by catalyzing the cutting and rejoining of the recombining DNA molecules. The chain is Tyrosine recombinase XerA from Pyrococcus horikoshii (strain ATCC 700860 / DSM 12428 / JCM 9974 / NBRC 100139 / OT-3).